We begin with the raw amino-acid sequence, 368 residues long: Type 2 DNA topoisomerase 6 subunit A (368 aa).

In terms of domain architecture, Topo IIA-type catalytic spans 9 to 148 (PDTEEAREQL…FHMRPEESGA (140 aa)). Catalysis depends on Tyr103, which acts as the O-(5'-phospho-DNA)-tyrosine intermediate. 2 residues coordinate Mg(2+): Glu201 and Asp253.

The protein belongs to the TOP6A family. As to quaternary structure, homodimer. Heterotetramer of two Top6A and two Top6B chains. Mg(2+) is required as a cofactor.

It carries out the reaction ATP-dependent breakage, passage and rejoining of double-stranded DNA.. In terms of biological role, relaxes both positive and negative superturns and exhibits a strong decatenase activity. This chain is Type 2 DNA topoisomerase 6 subunit A, found in Haloarcula marismortui (strain ATCC 43049 / DSM 3752 / JCM 8966 / VKM B-1809) (Halobacterium marismortui).